The sequence spans 770 residues: 1,4-alpha-glucan branching enzyme GlgB (770 aa).

Catalysis depends on D437, which acts as the Nucleophile. Catalysis depends on E488, which acts as the Proton donor.

The protein belongs to the glycosyl hydrolase 13 family. GlgB subfamily. Monomer.

The catalysed reaction is Transfers a segment of a (1-&gt;4)-alpha-D-glucan chain to a primary hydroxy group in a similar glucan chain.. Its pathway is glycan biosynthesis; glycogen biosynthesis. Functionally, catalyzes the formation of the alpha-1,6-glucosidic linkages in glycogen by scission of a 1,4-alpha-linked oligosaccharide from growing alpha-1,4-glucan chains and the subsequent attachment of the oligosaccharide to the alpha-1,6 position. In Synechococcus sp. (strain JA-3-3Ab) (Cyanobacteria bacterium Yellowstone A-Prime), this protein is 1,4-alpha-glucan branching enzyme GlgB.